A 413-amino-acid polypeptide reads, in one-letter code: N-acylneuraminate cytidylyltransferase (413 aa).

Belongs to the CMP-NeuNAc synthase family. The cofactor is Mg(2+). Mn(2+) is required as a cofactor.

It localises to the cytoplasm. The catalysed reaction is an N-acylneuraminate + CTP = a CMP-N-acyl-beta-neuraminate + diphosphate. Its function is as follows. Catalyzes the formation of CMP-N-acetylneuraminic acid (CMP-NeuNAc), which is essential for the formation of the capsule. This is N-acylneuraminate cytidylyltransferase (neuA) from Streptococcus agalactiae serotype V (strain ATCC BAA-611 / 2603 V/R).